The following is a 152-amino-acid chain: Putative membrane protein insertion efficiency factor (152 aa).

The disordered stretch occupies residues 81–152 (AAGGYDPVPG…IVGSGRGPWV (72 aa)).

Belongs to the UPF0161 family.

It is found in the cell membrane. Functionally, could be involved in insertion of integral membrane proteins into the membrane. This Frankia casuarinae (strain DSM 45818 / CECT 9043 / HFP020203 / CcI3) protein is Putative membrane protein insertion efficiency factor.